The chain runs to 284 residues: Phosphatidylglycerol--prolipoprotein diacylglyceryl transferase (284 aa).

A run of 7 helical transmembrane segments spans residues 19–39 (ISFY…MWFL), 60–80 (LLYL…VLFY), 98–118 (GGMS…WFSY), 130–150 (FIVP…FING), 199–219 (QLYE…IFSC), 225–245 (GSIS…IEFF), and 258–278 (FITL…IIMY). Position 143 (Arg143) interacts with a 1,2-diacyl-sn-glycero-3-phospho-(1'-sn-glycerol).

The protein belongs to the Lgt family.

It is found in the cell inner membrane. The catalysed reaction is L-cysteinyl-[prolipoprotein] + a 1,2-diacyl-sn-glycero-3-phospho-(1'-sn-glycerol) = an S-1,2-diacyl-sn-glyceryl-L-cysteinyl-[prolipoprotein] + sn-glycerol 1-phosphate + H(+). It functions in the pathway protein modification; lipoprotein biosynthesis (diacylglyceryl transfer). Its function is as follows. Catalyzes the transfer of the diacylglyceryl group from phosphatidylglycerol to the sulfhydryl group of the N-terminal cysteine of a prolipoprotein, the first step in the formation of mature lipoproteins. The protein is Phosphatidylglycerol--prolipoprotein diacylglyceryl transferase of Blochmanniella floridana.